Here is a 389-residue protein sequence, read N- to C-terminus: Formate-dependent phosphoribosylglycinamide formyltransferase (389 aa).

N(1)-(5-phospho-beta-D-ribosyl)glycinamide is bound by residues 21–22 (EL) and Glu81. ATP contacts are provided by residues Arg113, Lys154, 159-164 (SSGKGQ), 194-197 (EEFI), and Glu202. One can recognise an ATP-grasp domain in the interval 118–307 (RLAAEKLGLK…EFEIHVRAIL (190 aa)). Mg(2+) is bound by residues Glu266 and Glu278. N(1)-(5-phospho-beta-D-ribosyl)glycinamide-binding positions include Asp285, Lys353, and 360-361 (RR).

This sequence belongs to the PurK/PurT family. In terms of assembly, homodimer.

The enzyme catalyses N(1)-(5-phospho-beta-D-ribosyl)glycinamide + formate + ATP = N(2)-formyl-N(1)-(5-phospho-beta-D-ribosyl)glycinamide + ADP + phosphate + H(+). Its pathway is purine metabolism; IMP biosynthesis via de novo pathway; N(2)-formyl-N(1)-(5-phospho-D-ribosyl)glycinamide from N(1)-(5-phospho-D-ribosyl)glycinamide (formate route): step 1/1. Involved in the de novo purine biosynthesis. Catalyzes the transfer of formate to 5-phospho-ribosyl-glycinamide (GAR), producing 5-phospho-ribosyl-N-formylglycinamide (FGAR). Formate is provided by PurU via hydrolysis of 10-formyl-tetrahydrofolate. The polypeptide is Formate-dependent phosphoribosylglycinamide formyltransferase (Methanocaldococcus jannaschii (strain ATCC 43067 / DSM 2661 / JAL-1 / JCM 10045 / NBRC 100440) (Methanococcus jannaschii)).